The primary structure comprises 1079 residues: Psi-producing oxygenase A (1079 aa).

A linoleate 8R-lipoxygenase region spans residues 105–446; it reads TNTFLTTLWN…DGSYDDNDLV (342 aa). Position 202 (His202) interacts with heme b. The active site involves Tyr374. Position 377 (His377) interacts with heme b. The tract at residues 654 to 1079 is 9,12-octadecadienoate 8-hydroperoxide 8R-isomerase; sequence QFINSHSACM…WDGDLPEVKE (426 aa).

This sequence belongs to the peroxidase family. Homotetramer. The cofactor is heme b.

The enzyme catalyses (9Z,12Z)-octadecadienoate + O2 = (8R,9Z,12Z)-8-hydroperoxyoctadeca-9,12-dienoate. It carries out the reaction (8R,9Z,12Z)-8-hydroperoxyoctadeca-9,12-dienoate = (5S,8R,9Z,12Z)-5,8-dihydroxyoctadeca-9,12-dienoate. In terms of biological role, bifunctional heme-containing enzyme that oxidizes linoleic acid to (8R,9Z,12Z)-8-hydroperoxyoctadeca-9,12-dienoate (within the N-terminal heme peroxidase domain), which is subsequently isomerized to (5S,8R,9Z,12Z)-5,8-dihydroxyoctadeca-9,12-dienoate (within the C-terminal P450 heme thiolate domain). Oxidized unsaturated fatty acids, so-called oxylipins, derived from endogenous fatty acids, influence the development of the asexual conidiophores and sexual cleistothecia and regulate the secondary metabolism. These substances were collectively named psi factors and are primarily a mixture of hydroxylated oleic, linoleic and alpha-linolenic acids. They are termed psi-beta, psi-alpha, and psi-gamma, respectively. Oxylipins may also serve as activators of mammalian immune responses contributing to enhanced resistance to opportunistic fungi and as factors that modulate fungal development contributing to resistance to host defenses. The protein is Psi-producing oxygenase A (ppoA) of Aspergillus fumigatus (strain ATCC MYA-4609 / CBS 101355 / FGSC A1100 / Af293) (Neosartorya fumigata).